Here is a 413-residue protein sequence, read N- to C-terminus: MPSSISWGLLLLAALSCLGPGSLAQDAQETEASKQDQEHPASHRIAPHLAEFALSLYRVLARQSNTTNIFFSPVSIATALAMLSLGTKGDTHTQILEGLDFNLTEMAEADIHQGFQHLLQTLNRPNTQLQLTSGNGLFIHQNLKLLDKFLEDVKSLYHSEAFPTNFTNMEEARQQINSYVEKGTQGKIVELVKELDSDTVLALVNYIFFKGKWLKPFNEEHTREEDFHVDEATTVRVPMMNREGRFHLHHCSTLASWVLQMDYLGNATAIFLLPDEGKMQHLEDTVSTEILSKFLKNRQTTRVSLYFPKVSISGTYALKTVLSSLGITKVFSNAADLSGVTEEAPLIVSKALHKAVLDIDEEGTEAAGATVGGITFMSRPKEVIFDRPFLVVIYEHHTKSPLFVGKVVNPTQQ.

A signal peptide spans 1–24 (MPSSISWGLLLLAALSCLGPGSLA). Position 25 is a pyrrolidone carboxylic acid (glutamine 25). N-linked (GlcNAc...) asparagine glycans are attached at residues asparagine 65, asparagine 102, asparagine 165, and asparagine 266. The interval 368–387 (GATVGGITFMSRPKEVIFDR) is RCL.

Belongs to the serpin family. In terms of tissue distribution, expressed in liver.

The protein localises to the secreted. In terms of biological role, serine protease inhibitor. The chain is Alpha-1-antitrypsin-like protein CM55-MS from Tamias sibiricus (Siberian chipmunk).